A 498-amino-acid chain; its full sequence is MSKIRTRYAPSPTGYFHIGGARTALFNYLFAKHNNGEFIVRIEDTDIERNVEDGAENQLYNLKWLNIFADESIWNPTQSGPYRQSEKLEVYQKYAYQLLEEKKAYRCFCTPEELQKHREDLLKQYKPPIYSRKCFLLSEEQIHKNLADKIPFTIRLLLRDNKEYSWNDLIRGNLIFNTSSMSDPVILKSNQIATYNFAVVIDDHDMKISHILRGEEHISNTPYQLAIKEALGFKDEFVYGHLSIIVDETGKKLSKRNLAVEQFVEGFRKKGYLAEALVNFIALLGWSHPDNIEILDLPTLVKSFTIKNLSAAPSFFDIKKLNWISSEYIKNMDDVMYLAFIKPYVDLNEYDEIKTKVNEICLMFKNQLQYGYQINEIIKESFVPHVGLSNLDQADLDFLKSNPNYRQLLISFKEKINQLDQVNDHNVKEIINWLAHQIKLGDLVLEKPLGGKNLYMPLRIVLSNKKHGPELNKVIALYDKQTILKNLDDAINYLTNAK.

The 'HIGH' region signature appears at 10–20 (PSPTGYFHIGG). Positions 252 to 256 (KLSKR) match the 'KMSKS' region motif. Residue Lys255 participates in ATP binding.

The protein belongs to the class-I aminoacyl-tRNA synthetase family. Glutamate--tRNA ligase type 1 subfamily. As to quaternary structure, monomer.

Its subcellular location is the cytoplasm. It carries out the reaction tRNA(Glu) + L-glutamate + ATP = L-glutamyl-tRNA(Glu) + AMP + diphosphate. Functionally, catalyzes the attachment of glutamate to tRNA(Glu) in a two-step reaction: glutamate is first activated by ATP to form Glu-AMP and then transferred to the acceptor end of tRNA(Glu). This chain is Glutamate--tRNA ligase, found in Mycoplasmoides gallisepticum (strain R(low / passage 15 / clone 2)) (Mycoplasma gallisepticum).